A 132-amino-acid chain; its full sequence is UPF0146 protein PF0123 (132 aa).

This sequence belongs to the UPF0146 family.

This Pyrococcus furiosus (strain ATCC 43587 / DSM 3638 / JCM 8422 / Vc1) protein is UPF0146 protein PF0123.